Here is a 1294-residue protein sequence, read N- to C-terminus: Phosphoribosylformylglycinamidine synthase (1294 aa).

The disordered stretch occupies residues 303–325 (WPGAATGSGGEIRDEGATGRGSK). ATP contacts are provided by residues 305 to 316 (GAATGSGGEIRD), 384 to 386 (TGY), and alanine 676. Positions 677, 716, 720, and 883 each coordinate Mg(2+). Residue serine 885 participates in ATP binding. The Glutamine amidotransferase type-1 domain occupies 1041–1294 (VAVLREQGVN…MFRNARRQLG (254 aa)). Cysteine 1134 (nucleophile) is an active-site residue. Active-site residues include histidine 1259 and glutamate 1261.

It in the N-terminal section; belongs to the FGAMS family. Monomer.

It is found in the cytoplasm. It catalyses the reaction N(2)-formyl-N(1)-(5-phospho-beta-D-ribosyl)glycinamide + L-glutamine + ATP + H2O = 2-formamido-N(1)-(5-O-phospho-beta-D-ribosyl)acetamidine + L-glutamate + ADP + phosphate + H(+). The protein operates within purine metabolism; IMP biosynthesis via de novo pathway; 5-amino-1-(5-phospho-D-ribosyl)imidazole from N(2)-formyl-N(1)-(5-phospho-D-ribosyl)glycinamide: step 1/2. In terms of biological role, phosphoribosylformylglycinamidine synthase involved in the purines biosynthetic pathway. Catalyzes the ATP-dependent conversion of formylglycinamide ribonucleotide (FGAR) and glutamine to yield formylglycinamidine ribonucleotide (FGAM) and glutamate. This chain is Phosphoribosylformylglycinamidine synthase, found in Pectobacterium atrosepticum (strain SCRI 1043 / ATCC BAA-672) (Erwinia carotovora subsp. atroseptica).